Here is an 815-residue protein sequence, read N- to C-terminus: Vacuolar proton translocating ATPase 100 kDa subunit (815 aa).

Over 1-402 the chain is Cytoplasmic; the sequence is MSFLRPSIWR…NAYGIAHYRE (402 aa). A helical membrane pass occupies residues 403-421; it reads VNPAVLTIVTFPFLFGVMF. Topologically, residues 422–423 are vacuolar; it reads GD. A helical membrane pass occupies residues 424–440; the sequence is VGHGALLLLSALGLISL. Over 441 to 454 the chain is Cytoplasmic; the sequence is EKKLAGKKLNELIQ. The chain crosses the membrane as a helical span at residues 455–484; the sequence is MPFDGRYVLFLMSLFSIYVGFIYNECFSIP. Topologically, residues 485-530 are vacuolar; sequence MNIFGSQYNLNSTTGLYTYQHTDRVYPVGVDPLWKGAPNELVYYNS. A helical membrane pass occupies residues 531-550; the sequence is FKMKLSIIFGVVQMSVGICF. Over 551–571 the chain is Cytoplasmic; the sequence is SLLNYLNQKGPIKIVNILTQF. The chain crosses the membrane as a helical span at residues 572–592; sequence VPQMIFLWSIFGYMSVLIILK. Residues 593–639 are Vacuolar-facing; the sequence is WVVPYRSFEVDKVDPPFILPTIIAMFLSPGGTPDVVFFSGQGAVQTA. The chain crosses the membrane as a helical span at residues 640-659; sequence LLFLALISIPVMLVIKPLFM. The Cytoplasmic portion of the chain corresponds to 660–706; that stretch reads KRFHFQEVERKKLGHHEEEHDDEALYTGHHGEEFEMGEVFVHQVIHT. The helical transmembrane segment at 707–731 threads the bilayer; sequence IEFVLGAVSNTASYLRLWALSLAHS. Over 732-749 the chain is Vacuolar; it reads ELSSVFWERILIGQVERG. Residues 750 to 788 traverse the membrane as a helical segment; the sequence is NPFLAFVGFGAWLGASVAVLLLMESLSAFLHALRLHWVE. The Cytoplasmic portion of the chain corresponds to 789–815; it reads FQNKFYIGDGVRFIPYSATRILSEDDE.

It belongs to the V-ATPase 116 kDa subunit family. As to quaternary structure, the V-ATPase is a heteromultimeric enzyme.

It localises to the cytoplasmic vesicle membrane. It is found in the endosome membrane. The protein localises to the vacuole membrane. Its subcellular location is the lysosome membrane. Essential component of the vacuolar proton pump (V-ATPase), a multimeric enzyme that catalyzes the translocation of protons across the membranes. Required for assembly and activity of the V-ATPase. Required in both the contractile vacuole system and the endosomal/lysosomal system. Also required for cytosolic pH regulation. The protein is Vacuolar proton translocating ATPase 100 kDa subunit (vatM) of Dictyostelium discoideum (Social amoeba).